The chain runs to 145 residues: D-aminoacyl-tRNA deacylase (145 aa).

A Gly-cisPro motif, important for rejection of L-amino acids motif is present at residues 137–138 (GP).

This sequence belongs to the DTD family. As to quaternary structure, homodimer.

It is found in the cytoplasm. The enzyme catalyses glycyl-tRNA(Ala) + H2O = tRNA(Ala) + glycine + H(+). It catalyses the reaction a D-aminoacyl-tRNA + H2O = a tRNA + a D-alpha-amino acid + H(+). In terms of biological role, an aminoacyl-tRNA editing enzyme that deacylates mischarged D-aminoacyl-tRNAs. Also deacylates mischarged glycyl-tRNA(Ala), protecting cells against glycine mischarging by AlaRS. Acts via tRNA-based rather than protein-based catalysis; rejects L-amino acids rather than detecting D-amino acids in the active site. By recycling D-aminoacyl-tRNA to D-amino acids and free tRNA molecules, this enzyme counteracts the toxicity associated with the formation of D-aminoacyl-tRNA entities in vivo and helps enforce protein L-homochirality. In Alcanivorax borkumensis (strain ATCC 700651 / DSM 11573 / NCIMB 13689 / SK2), this protein is D-aminoacyl-tRNA deacylase.